We begin with the raw amino-acid sequence, 353 residues long: Holliday junction branch migration complex subunit RuvB (353 aa).

Residues 1–25 (MDPGPAGDEVSLAPQQETAEQDVET) form a disordered region. Residues 1–188 (MDPGPAGDEV…FGFTAHMEFY (188 aa)) form a large ATPase domain (RuvB-L) region. ATP-binding positions include Leu-27, Arg-28, Gly-69, Lys-72, Thr-73, Ser-74, 135-137 (EDY), Arg-178, Tyr-188, and Arg-225. Residue Thr-73 coordinates Mg(2+). The segment at 189–259 (EPAELELVVR…VARAALEVYD (71 aa)) is small ATPAse domain (RuvB-S). The segment at 262-353 (EHGLDRLDRA…ATRSLFADEV (92 aa)) is head domain (RuvB-H). 2 residues coordinate DNA: Arg-317 and Arg-322.

The protein belongs to the RuvB family. In terms of assembly, homohexamer. Forms an RuvA(8)-RuvB(12)-Holliday junction (HJ) complex. HJ DNA is sandwiched between 2 RuvA tetramers; dsDNA enters through RuvA and exits via RuvB. An RuvB hexamer assembles on each DNA strand where it exits the tetramer. Each RuvB hexamer is contacted by two RuvA subunits (via domain III) on 2 adjacent RuvB subunits; this complex drives branch migration. In the full resolvosome a probable DNA-RuvA(4)-RuvB(12)-RuvC(2) complex forms which resolves the HJ.

It is found in the cytoplasm. The catalysed reaction is ATP + H2O = ADP + phosphate + H(+). Its function is as follows. The RuvA-RuvB-RuvC complex processes Holliday junction (HJ) DNA during genetic recombination and DNA repair, while the RuvA-RuvB complex plays an important role in the rescue of blocked DNA replication forks via replication fork reversal (RFR). RuvA specifically binds to HJ cruciform DNA, conferring on it an open structure. The RuvB hexamer acts as an ATP-dependent pump, pulling dsDNA into and through the RuvAB complex. RuvB forms 2 homohexamers on either side of HJ DNA bound by 1 or 2 RuvA tetramers; 4 subunits per hexamer contact DNA at a time. Coordinated motions by a converter formed by DNA-disengaged RuvB subunits stimulates ATP hydrolysis and nucleotide exchange. Immobilization of the converter enables RuvB to convert the ATP-contained energy into a lever motion, pulling 2 nucleotides of DNA out of the RuvA tetramer per ATP hydrolyzed, thus driving DNA branch migration. The RuvB motors rotate together with the DNA substrate, which together with the progressing nucleotide cycle form the mechanistic basis for DNA recombination by continuous HJ branch migration. Branch migration allows RuvC to scan DNA until it finds its consensus sequence, where it cleaves and resolves cruciform DNA. In Saccharopolyspora erythraea (strain ATCC 11635 / DSM 40517 / JCM 4748 / NBRC 13426 / NCIMB 8594 / NRRL 2338), this protein is Holliday junction branch migration complex subunit RuvB.